The sequence spans 260 residues: 5'-nucleotidase SurE (260 aa).

A divalent metal cation contacts are provided by Asp8, Asp9, Ser39, and Asn93.

It belongs to the SurE nucleotidase family. Requires a divalent metal cation as cofactor.

The protein localises to the cytoplasm. It carries out the reaction a ribonucleoside 5'-phosphate + H2O = a ribonucleoside + phosphate. Its function is as follows. Nucleotidase that shows phosphatase activity on nucleoside 5'-monophosphates. The polypeptide is 5'-nucleotidase SurE (Thermofilum pendens (strain DSM 2475 / Hrk 5)).